The chain runs to 220 residues: Glutathione S-transferase 2 (220 aa).

The GST N-terminal domain occupies 2–88; the sequence is VVTLGYWDIR…YIARKHNMCG (87 aa). Glutathione is bound by residues 7-8, 43-46, K50, 59-60, and 72-73; these read YW, PSDW, NL, and QS. Residues 90–208 form the GST C-terminal domain; the sequence is TEVEKQRVDV…RSGRFMKAPI (119 aa). Y116 serves as a coordination point for substrate.

It belongs to the GST superfamily. Mu family. As to quaternary structure, homodimer.

The protein localises to the cytoplasm. The catalysed reaction is RX + glutathione = an S-substituted glutathione + a halide anion + H(+). In terms of biological role, conjugation of reduced glutathione to a wide number of exogenous and endogenous hydrophobic electrophiles. Participates in the formation of novel hepoxilin regioisomers. The polypeptide is Glutathione S-transferase 2 (GSTM2) (Gallus gallus (Chicken)).